Here is a 611-residue protein sequence, read N- to C-terminus: tRNA uridine 5-carboxymethylaminomethyl modification enzyme MnmG (611 aa).

14 to 19 (GAGHAG) serves as a coordination point for FAD. 274 to 288 (GPRYCPSIEDKIVKF) is a binding site for NAD(+).

It belongs to the MnmG family. Homodimer. Heterotetramer of two MnmE and two MnmG subunits. It depends on FAD as a cofactor.

The protein localises to the cytoplasm. In terms of biological role, NAD-binding protein involved in the addition of a carboxymethylaminomethyl (cmnm) group at the wobble position (U34) of certain tRNAs, forming tRNA-cmnm(5)s(2)U34. This Chlamydia felis (strain Fe/C-56) (Chlamydophila felis) protein is tRNA uridine 5-carboxymethylaminomethyl modification enzyme MnmG.